Consider the following 184-residue polypeptide: MQKTKLRLIFMIIYKEIAKLNKTFPLLNEEKILLGTDGSVTNILEILFEGECRVETINQKIVANTNYREVILKVNNIPLVYAVSKTPFKNIEEENLREEIKRDLLSADIPIGKIIRKHNLETRREIKYIGIAEIDDYLKSLLKTNYSRLPKRTYNIIYKNKVLMEITEIFAVRGKLVKNTYSID.

The protein belongs to the chorismate pyruvate-lyase type 2 family.

This is Putative lyase MJ0807 from Methanocaldococcus jannaschii (strain ATCC 43067 / DSM 2661 / JAL-1 / JCM 10045 / NBRC 100440) (Methanococcus jannaschii).